The chain runs to 205 residues: LIM domain-containing protein PLIM2b (205 aa).

LIM zinc-binding domains are found at residues 8–68 and 102–162; these read DKCN…LFKE and DKCA…LFME. The disordered stretch occupies residues 177–205; the sequence is RTASGNTLPPEPTEDVAVEAKEENGVSES. Positions 194–205 are enriched in basic and acidic residues; it reads VEAKEENGVSES.

As to quaternary structure, interacts with F-actin. Predominantly expressed in flowers and in pollen grains. Detected in vasculature and roots.

It localises to the cytoplasm. Its subcellular location is the cytoskeleton. Functionally, binds to actin filaments and promotes cross-linking into thick bundles. Has an actin-stabilizing activity. The actin regulatory activities are inhibited by pH &gt; 6.8 but are [Ca(2+)] independent. This Arabidopsis thaliana (Mouse-ear cress) protein is LIM domain-containing protein PLIM2b.